A 473-amino-acid polypeptide reads, in one-letter code: M-phase inducer phosphatase 3 (473 aa).

The segment at 1 to 23 is disordered; that stretch reads MSTELFSSTREEGSSGSGPSFRS. Ser2 carries the N-acetylserine modification. A phosphoserine mark is found at Ser20 and Ser38. The residue at position 48 (Thr48) is a Phosphothreonine. Ser57, Ser61, and Ser64 each carry phosphoserine. Residue Thr67 is modified to Phosphothreonine. Position 122 is a phosphoserine; by CDK1 (Ser122). The residue at position 129 (Ser129) is a Phosphoserine. Thr130 carries the post-translational modification Phosphothreonine. Residues 132–158 form a disordered region; the sequence is NGLDRGHRKRDAMCSSSANKENDNGNL. Polar residues predominate over residues 145-158; sequence CSSSANKENDNGNL. Ser168 carries the phosphoserine modification. Phosphoserine; by PLK3 occurs at positions 191 and 198. At Ser214 the chain carries Phosphoserine; by CDK1. Position 216 is a phosphoserine; by CHEK1, CHEK2, BRSK1, MAPK14 AND MARK3 (Ser216). The Rhodanese domain occupies 321-428; the sequence is LIEKFYVIDC…FFPEYMELCE (108 aa). Positions 334 to 379 are HIV-1 Vpr binding site; the sequence is YEYLGGHIQGALNLYSQEELFNFFLKKPIVPLDTQKRIIIVFHCEF. Cys377 is an active-site residue. A Phosphoserine modification is found at Ser472.

This sequence belongs to the MPI phosphatase family. Interacts with MAPK14 and 14-3-3 proteins. When phosphorylated on Ser-129 and/or Thr-130, interacts with PLK1. Interacts with MARK3/C-TAK1. In terms of assembly, (Microbial infection) Interacts with HIV-1 Vpr; this interaction inactivates CDC25C phosphatase activity. In terms of processing, phosphorylated by CHEK1 and MAPK14 at Ser-216. This phosphorylation creates a binding site for 14-3-3 protein and inhibits the phosphatase. Phosphorylated by PLK4. Phosphorylated by PLK1, leading to activate the phosphatase activity. Phosphorylation by PLK3 at Ser-191 promotes nuclear translocation. Ser-198 is a minor phosphorylation site. Was initially reported to be phosphorylated by PLK3 at Ser-216. However, such phosphorylation by PLK3 was not confirmed by other groups. Phosphorylation at Thr-48, Thr-67, Ser-122, Thr-130, Ser-168 and Ser-214 occurs at G2 and G2-M transition and is probably catalyzed by CDK1. Ser-168 phosphorylation levels are lower than those at the other 5 CDK1 sites. Phosphorylation by CDK1 leads to increased activity.

The protein resides in the nucleus. It carries out the reaction O-phospho-L-tyrosyl-[protein] + H2O = L-tyrosyl-[protein] + phosphate. Its function is as follows. Functions as a dosage-dependent inducer in mitotic control. Tyrosine protein phosphatase required for progression of the cell cycle. When phosphorylated, highly effective in activating G2 cells into prophase. Directly dephosphorylates CDK1 and activates its kinase activity. The polypeptide is M-phase inducer phosphatase 3 (CDC25C) (Homo sapiens (Human)).